The following is a 347-amino-acid chain: Phosphate acyltransferase (347 aa).

It belongs to the PlsX family. As to quaternary structure, homodimer. Probably interacts with PlsY.

It localises to the cytoplasm. The catalysed reaction is a fatty acyl-[ACP] + phosphate = an acyl phosphate + holo-[ACP]. The protein operates within lipid metabolism; phospholipid metabolism. Catalyzes the reversible formation of acyl-phosphate (acyl-PO(4)) from acyl-[acyl-carrier-protein] (acyl-ACP). This enzyme utilizes acyl-ACP as fatty acyl donor, but not acyl-CoA. The protein is Phosphate acyltransferase of Dehalococcoides mccartyi (strain ATCC BAA-2100 / JCM 16839 / KCTC 5957 / BAV1).